A 44-amino-acid polypeptide reads, in one-letter code: Photosystem I reaction center subunit IX (44 aa).

The helical transmembrane segment at Tyr7–Ile27 threads the bilayer.

It belongs to the PsaJ family.

The protein localises to the plastid. The protein resides in the chloroplast thylakoid membrane. In terms of biological role, may help in the organization of the PsaE and PsaF subunits. The protein is Photosystem I reaction center subunit IX of Pelargonium hortorum (Common geranium).